A 352-amino-acid polypeptide reads, in one-letter code: GTPase Obg (352 aa).

The Obg domain maps to 1–159; that stretch reads MSFIDEAKVF…FPIFMQLKVL (159 aa). In terms of domain architecture, OBG-type G spans 160–327; it reads SDIGIIGMPN…VMLYEMLQKD (168 aa). Residues 166–173, 191–195, 212–215, 279–282, and 308–310 each bind GTP; these read GMPNAGKS, FTTLE, DIPG, NKCD, and SLD. Mg(2+) contacts are provided by serine 173 and threonine 193.

It belongs to the TRAFAC class OBG-HflX-like GTPase superfamily. OBG GTPase family. As to quaternary structure, monomer. Mg(2+) serves as cofactor.

It is found in the cytoplasm. Its function is as follows. An essential GTPase which binds GTP, GDP and possibly (p)ppGpp with moderate affinity, with high nucleotide exchange rates and a fairly low GTP hydrolysis rate. Plays a role in control of the cell cycle, stress response, ribosome biogenesis and in those bacteria that undergo differentiation, in morphogenesis control. This chain is GTPase Obg, found in Anaplasma phagocytophilum (strain HZ).